A 409-amino-acid polypeptide reads, in one-letter code: Effector protein BipC (409 aa).

Disordered stretches follow at residues 268–287 (RETG…RMSD) and 330–396 (SGGQ…VAND). Positions 360 to 369 (AQQTAMAAAS) are enriched in low complexity. Positions 370 to 382 (ARDEAAHRGRDAA) are enriched in basic and acidic residues.

Belongs to the SctB/SipC family.

It localises to the secreted. This Burkholderia thailandensis (strain ATCC 700388 / DSM 13276 / CCUG 48851 / CIP 106301 / E264) protein is Effector protein BipC (bipC).